The chain runs to 65 residues: Large ribosomal subunit protein bL35 (65 aa).

This sequence belongs to the bacterial ribosomal protein bL35 family.

This Synechococcus sp. (strain CC9605) protein is Large ribosomal subunit protein bL35.